A 120-amino-acid polypeptide reads, in one-letter code: Glycine cleavage system H protein (120 aa).

The 83-residue stretch at 17–99 (VATVGITAHA…QGAGWLYRLK (83 aa)) folds into the Lipoyl-binding domain. Lys-58 carries the post-translational modification N6-lipoyllysine.

It belongs to the GcvH family. The glycine cleavage system is composed of four proteins: P, T, L and H. Requires (R)-lipoate as cofactor.

Its function is as follows. The glycine cleavage system catalyzes the degradation of glycine. The H protein shuttles the methylamine group of glycine from the P protein to the T protein. This Methylorubrum populi (strain ATCC BAA-705 / NCIMB 13946 / BJ001) (Methylobacterium populi) protein is Glycine cleavage system H protein.